We begin with the raw amino-acid sequence, 262 residues long: MNILVVKTPEELAEAGYKLIEEVVKTKENPTLGMATGSSPLGIYAEMRKNKLDTSRVTTVNLDEYVNLPHEDKNSYHYFMQEQLFDHLPFKQTYVPNGMASDLEEECKRYESILAANPVDLQILGIGENGHIGFNEPGTPFNSPTNIVELTESTRQANLRFFEKEEDVPTHAITMGIGSIMKAKQVLLVAMGSKKAEAVKELLQGEYSEECPATVLQRHPNVTVIADQEALSLCSEAIADEHRQVFTISDLLSDSRVGETAN.

Catalysis depends on D63, which acts as the Proton acceptor; for enolization step. N129 serves as the catalytic For ring-opening step. H131 acts as the Proton acceptor; for ring-opening step in catalysis. E136 functions as the For ring-opening step in the catalytic mechanism.

The protein belongs to the glucosamine/galactosamine-6-phosphate isomerase family. NagB subfamily.

The catalysed reaction is alpha-D-glucosamine 6-phosphate + H2O = beta-D-fructose 6-phosphate + NH4(+). The protein operates within amino-sugar metabolism; N-acetylneuraminate degradation; D-fructose 6-phosphate from N-acetylneuraminate: step 5/5. In terms of biological role, catalyzes the reversible isomerization-deamination of glucosamine 6-phosphate (GlcN6P) to form fructose 6-phosphate (Fru6P) and ammonium ion. The protein is Glucosamine-6-phosphate deaminase of Bacillus cereus (strain B4264).